We begin with the raw amino-acid sequence, 354 residues long: Elongation factor Ts (354 aa).

The segment at 81–84 is involved in Mg(2+) ion dislocation from EF-Tu; that stretch reads TDFV.

This sequence belongs to the EF-Ts family.

The protein localises to the cytoplasm. In terms of biological role, associates with the EF-Tu.GDP complex and induces the exchange of GDP to GTP. It remains bound to the aminoacyl-tRNA.EF-Tu.GTP complex up to the GTP hydrolysis stage on the ribosome. In Campylobacter fetus subsp. fetus (strain 82-40), this protein is Elongation factor Ts.